A 444-amino-acid polypeptide reads, in one-letter code: Platelet-activating factor acetylhydrolase (444 aa).

Residues 1–21 (MLPSKLHALFCLCTCLALVYP) form the signal peptide. N60 and N200 each carry an N-linked (GlcNAc...) asparagine glycan. The active-site Nucleophile is the S274. Residues D297 and H352 each act as charge relay system in the active site. N424 and N434 each carry an N-linked (GlcNAc...) asparagine glycan.

It belongs to the AB hydrolase superfamily. Lipase family. N-glycosylated. As to expression, plasma.

It is found in the secreted. The protein resides in the extracellular space. It catalyses the reaction a 1-O-alkyl-2-acetyl-sn-glycero-3-phosphocholine + H2O = a 1-O-alkyl-sn-glycero-3-phosphocholine + acetate + H(+). It carries out the reaction 1-O-decyl-2-acetyl-sn-glycero-3-phosphocholine + H2O = 1-O-decyl-sn-glycero-3-phosphocholine + acetate + H(+). The enzyme catalyses 1-O-dodecyl-2-acetyl-sn-glycero-3-phosphocholine + H2O = 1-O-dodecyl-sn-glycero-3-phosphocholine + acetate + H(+). The catalysed reaction is 1-O-tetradecyl-2-acetyl-sn-glycero-3-phosphocholine + H2O = 1-O-tetradecyl-sn-glycero-3-phosphocholine + acetate + H(+). It catalyses the reaction 1-O-hexadecyl-2-acetyl-sn-glycero-3-phosphocholine + H2O = 1-O-hexadecyl-sn-glycero-3-phosphocholine + acetate + H(+). It carries out the reaction 1-O-octadecyl-2-acetyl-sn-glycero-3-phosphocholine + H2O = 1-O-octadecyl-sn-glycero-3-phosphocholine + acetate + H(+). The enzyme catalyses 1-hexadecanoyl-2-acetyl-sn-glycero-3-phosphocholine + H2O = 1-hexadecanoyl-sn-glycero-3-phosphocholine + acetate + H(+). The catalysed reaction is 1-hexadecanoyl-2-propionyl-sn-glycero-3-phosphocholine + H2O = propanoate + 1-hexadecanoyl-sn-glycero-3-phosphocholine + H(+). It catalyses the reaction 1-hexadecanoyl-2-butanoyl-sn-glycero-3-phosphocholine + H2O = butanoate + 1-hexadecanoyl-sn-glycero-3-phosphocholine + H(+). It carries out the reaction 1-hexadecanoyl-2-pentanoyl-sn-glycero-3-phosphocholine + H2O = pentanoate + 1-hexadecanoyl-sn-glycero-3-phosphocholine + H(+). The enzyme catalyses 1-hexadecanoyl-2-glutaroyl-sn-glycero-3-phosphocholine + H2O = glutarate + 1-hexadecanoyl-sn-glycero-3-phosphocholine + H(+). The catalysed reaction is 1-hexadecanoyl-2-(5-oxopentanoyl)-sn-glycero-3-phosphocholine + H2O = 5-oxopentanoate + 1-hexadecanoyl-sn-glycero-3-phosphocholine + H(+). It catalyses the reaction 1-hexadecanoyl-2-(9-oxononanoyl)-sn-glycero-3-phosphocholine + H2O = 9-oxononanoate + 1-hexadecanoyl-sn-glycero-3-phosphocholine + H(+). It carries out the reaction 1-hexadecanoyl-2-[9-hydroperoxy-(10E-octadecenoyl)]-sn-glycero-3-phosphocholine + H2O = 9-hydroperoxy-10E-octadecenoate + 1-hexadecanoyl-sn-glycero-3-phosphocholine + H(+). The enzyme catalyses 1-hexadecanoyl-2-(10-hydroperoxy-8E-octadecenoyl)-sn-glycero-3-phosphocholine + H2O = 10-hydroperoxy-(8E)-octadecenoate + 1-hexadecanoyl-sn-glycero-3-phosphocholine + H(+). Lipoprotein-associated calcium-independent phospholipase A2 involved in phospholipid catabolism during inflammatory and oxidative stress response. At the lipid-aqueous interface, hydrolyzes the ester bond of fatty acyl group attached at sn-2 position of phospholipids (phospholipase A2 activity). Specifically targets phospholipids with a short-chain fatty acyl group at sn-2 position. Can hydrolyze phospholipids with long fatty acyl chains, only if they carry oxidized functional groups. Hydrolyzes and inactivates platelet-activating factor (PAF, 1-O-alkyl-2-acetyl-sn-glycero-3-phosphocholine), a potent pro-inflammatory signaling lipid that acts through PTAFR on various innate immune cells. Hydrolyzes oxidatively truncated phospholipids carrying an aldehyde group at omega position, preventing their accumulation in low-density lipoprotein (LDL) particles and uncontrolled pro-inflammatory effects. As part of high-density lipoprotein (HDL) particles, can hydrolyze phospholipids having long-chain fatty acyl hydroperoxides at sn-2 position and protect against potential accumulation of these oxylipins in the vascular wall. Catalyzes the release from membrane phospholipids of F2-isoprostanes, lipid biomarkers of cellular oxidative damage. The protein is Platelet-activating factor acetylhydrolase (PLA2G7) of Bos taurus (Bovine).